A 433-amino-acid polypeptide reads, in one-letter code: Enolase (433 aa).

Gln-166 is a (2R)-2-phosphoglycerate binding site. The active-site Proton donor is Glu-208. Asp-245, Glu-290, and Asp-317 together coordinate Mg(2+). The (2R)-2-phosphoglycerate site is built by Lys-342, Arg-371, Ser-372, and Lys-393. Lys-342 acts as the Proton acceptor in catalysis.

It belongs to the enolase family. The cofactor is Mg(2+).

The protein localises to the cytoplasm. The protein resides in the secreted. Its subcellular location is the cell surface. It carries out the reaction (2R)-2-phosphoglycerate = phosphoenolpyruvate + H2O. It participates in carbohydrate degradation; glycolysis; pyruvate from D-glyceraldehyde 3-phosphate: step 4/5. Catalyzes the reversible conversion of 2-phosphoglycerate (2-PG) into phosphoenolpyruvate (PEP). It is essential for the degradation of carbohydrates via glycolysis. In Clostridium novyi (strain NT), this protein is Enolase.